Here is a 158-residue protein sequence, read N- to C-terminus: RNA pyrophosphohydrolase (158 aa).

The Nudix hydrolase domain maps to 6-150 (GYRLNVGIVL…KRDVYRKVMQ (145 aa)). The short motif at 39-60 (GGINIGETPEQAMYRELFEEIG) is the Nudix box element.

This sequence belongs to the Nudix hydrolase family. RppH subfamily. Requires a divalent metal cation as cofactor.

Accelerates the degradation of transcripts by removing pyrophosphate from the 5'-end of triphosphorylated RNA, leading to a more labile monophosphorylated state that can stimulate subsequent ribonuclease cleavage. In Blochmanniella pennsylvanica (strain BPEN), this protein is RNA pyrophosphohydrolase.